The following is a 502-amino-acid chain: MTSATYIMALDLGTTGNRAILFDQDGQIVDQAYKELPQYYPQPGWVEHDALEIWRDTRWAMETVVTQAHIDPAQIAAIGLTVQRETCLLWDKTTGQPLHKAIVWQDRRTAAYCNQLAEQGHTQDIYDRTGLVLDAYFSGSKLAWLLTEVKRQNPNLNLDNVIAGTIDTWALWNLTGGKVHATDHSNASRTLLLNLSQGTWDDHLLDLFGIPKSFMPAIQPSLGIFGKTDTKFLGQEIPIAAIFGDQQAALFAHGCDRPGALKCTYGTGSFLVAHTGSNIARSKNRLLSTVAWTQTDKGQTQTGYAIEGSMFTSGACIQWLRDGLKLIANAAETEGLAQAVEDNGGVYFVPALSGLGAPHWDMSARGAFLGITRGAQREHMVRAVLEAIAFQTKEVVDAVNQDCGSPIQQLKVDGGACQNNFLMQYQADVLGIPVERPAVLDATAQGAAFGAGLAIGVWKDYAGLVAARKIDQVFKPGANAQTAQANFKTWQKAVERAKNWAD.

Thr14 provides a ligand contact to ADP. ATP-binding residues include Thr14 and Thr15. Residue Thr14 participates in sn-glycerol 3-phosphate binding. Arg18 contributes to the ADP binding site. Arg84, Glu85, Tyr136, and Asp245 together coordinate sn-glycerol 3-phosphate. 5 residues coordinate glycerol: Arg84, Glu85, Tyr136, Asp245, and Gln246. Thr267 and Gly314 together coordinate ADP. ATP is bound by residues Thr267, Gly314, Gln318, and Gly415. Gly415 and Asn419 together coordinate ADP.

It belongs to the FGGY kinase family.

It carries out the reaction glycerol + ATP = sn-glycerol 3-phosphate + ADP + H(+). Its pathway is polyol metabolism; glycerol degradation via glycerol kinase pathway; sn-glycerol 3-phosphate from glycerol: step 1/1. With respect to regulation, inhibited by fructose 1,6-bisphosphate (FBP). Key enzyme in the regulation of glycerol uptake and metabolism. Catalyzes the phosphorylation of glycerol to yield sn-glycerol 3-phosphate. This is Glycerol kinase from Acaryochloris marina (strain MBIC 11017).